An 87-amino-acid chain; its full sequence is MRLHLLLLILLLFSILLSPVRGGLGPAEGHCLNLFGVCRTDVCNIVEDQIGACRRRMKCCRAWWILMPIPTPLIMSDYQEPLKPNLK.

The N-terminal stretch at 1–22 (MRLHLLLLILLLFSILLSPVRG) is a signal peptide. Disulfide bonds link cysteine 31–cysteine 59, cysteine 38–cysteine 53, and cysteine 43–cysteine 60.

It belongs to the beta-defensin family.

The protein localises to the secreted. Has antibacterial activity. In Homo sapiens (Human), this protein is Beta-defensin 109C (DEFB109C).